Reading from the N-terminus, the 697-residue chain is Polyribonucleotide nucleotidyltransferase (697 aa).

Mg(2+) is bound by residues Asp489 and Asp495. In terms of domain architecture, KH spans 556–615 (PRIETIKIKPDKIREVIGSGGKVIRGITEATGVKIEIQDDGTINIASADPEATKKAIAMI). The region spanning 625-693 (GKTYKGRIVK…RSGRVKLSRK (69 aa)) is the S1 motif domain.

The protein belongs to the polyribonucleotide nucleotidyltransferase family. It depends on Mg(2+) as a cofactor.

The protein resides in the cytoplasm. The catalysed reaction is RNA(n+1) + phosphate = RNA(n) + a ribonucleoside 5'-diphosphate. Functionally, involved in mRNA degradation. Catalyzes the phosphorolysis of single-stranded polyribonucleotides processively in the 3'- to 5'-direction. In Bdellovibrio bacteriovorus (strain ATCC 15356 / DSM 50701 / NCIMB 9529 / HD100), this protein is Polyribonucleotide nucleotidyltransferase.